Reading from the N-terminus, the 465-residue chain is uncharacterized protein (465 aa).

The helical transmembrane segment at 56-76 (ILYMIIFAIFGLLPFLIALIF) threads the bilayer. The segment at 177–198 (KFNKSKKSNKINDKTPILNNNN) is disordered. The helical transmembrane segment at 273-293 (LIFLLVSTILLIALIGFILII) threads the bilayer. The tract at residues 411-449 (NNYNNSNNNNNSNNSNSNNNNNNNNNNNNYNNNNYNNNN) is disordered.

The protein resides in the membrane. This is an uncharacterized protein from Dictyostelium discoideum (Social amoeba).